We begin with the raw amino-acid sequence, 441 residues long: tRNA-2-methylthio-N(6)-dimethylallyladenosine synthase (441 aa).

The MTTase N-terminal domain occupies 5 to 121 (KKLFIKTYGC…LPQMEARLRE (117 aa)). Residues Cys14, Cys50, Cys84, Cys159, Cys163, and Cys166 each contribute to the [4Fe-4S] cluster site. The Radical SAM core domain maps to 145–380 (ARRAPSAFLT…TRQQQDIQQS (236 aa)). In terms of domain architecture, TRAM spans 379-441 (QSMVGRDVSV…RNSLAAVTLA (63 aa)).

This sequence belongs to the methylthiotransferase family. MiaB subfamily. In terms of assembly, monomer. The cofactor is [4Fe-4S] cluster.

It localises to the cytoplasm. It catalyses the reaction N(6)-dimethylallyladenosine(37) in tRNA + (sulfur carrier)-SH + AH2 + 2 S-adenosyl-L-methionine = 2-methylsulfanyl-N(6)-dimethylallyladenosine(37) in tRNA + (sulfur carrier)-H + 5'-deoxyadenosine + L-methionine + A + S-adenosyl-L-homocysteine + 2 H(+). In terms of biological role, catalyzes the methylthiolation of N6-(dimethylallyl)adenosine (i(6)A), leading to the formation of 2-methylthio-N6-(dimethylallyl)adenosine (ms(2)i(6)A) at position 37 in tRNAs that read codons beginning with uridine. This Roseobacter denitrificans (strain ATCC 33942 / OCh 114) (Erythrobacter sp. (strain OCh 114)) protein is tRNA-2-methylthio-N(6)-dimethylallyladenosine synthase.